A 482-amino-acid polypeptide reads, in one-letter code: Methylenetetrahydrofolate--tRNA-(uracil-5-)-methyltransferase TrmFO (482 aa).

11 to 16 contributes to the FAD binding site; the sequence is GAGLAG.

This sequence belongs to the MnmG family. TrmFO subfamily. FAD serves as cofactor.

Its subcellular location is the cytoplasm. It catalyses the reaction uridine(54) in tRNA + (6R)-5,10-methylene-5,6,7,8-tetrahydrofolate + NADH + H(+) = 5-methyluridine(54) in tRNA + (6S)-5,6,7,8-tetrahydrofolate + NAD(+). It carries out the reaction uridine(54) in tRNA + (6R)-5,10-methylene-5,6,7,8-tetrahydrofolate + NADPH + H(+) = 5-methyluridine(54) in tRNA + (6S)-5,6,7,8-tetrahydrofolate + NADP(+). Functionally, catalyzes the folate-dependent formation of 5-methyl-uridine at position 54 (M-5-U54) in all tRNAs. This is Methylenetetrahydrofolate--tRNA-(uracil-5-)-methyltransferase TrmFO from Nitratidesulfovibrio vulgaris (strain DP4) (Desulfovibrio vulgaris).